The primary structure comprises 2545 residues: Methylphloroacetophenone synthase (2545 aa).

The interval Ala-8–Gln-261 is N-terminal acylcarrier protein transacylase (SAT) domain. The 416-residue stretch at Lys-383–Glu-798 folds into the Ketosynthase family 3 (KS3) domain. Active-site for beta-ketoacyl synthase activity residues include Cys-547, His-682, and His-721. Residues Leu-914–Ser-1218 are malonyl-CoA:ACP transacylase (MAT) domain. Ser-1001 functions as the For acyl/malonyl transferase activity in the catalytic mechanism. Residues Leu-1293–Asp-1423 are N-terminal hotdog fold. Positions Leu-1293–Ile-1605 constitute a PKS/mFAS DH domain. The segment at Val-1296–Pro-1604 is product template (PT) domain. The interval Arg-1449–Ile-1605 is C-terminal hotdog fold. In terms of domain architecture, Carrier spans Thr-1657 to Gly-1731. At Ser-1691 the chain carries O-(pantetheine 4'-phosphoryl)serine. Residues Ser-1748 to Ala-1768 show a composition bias toward low complexity. The segment at Ser-1748 to Pro-1773 is disordered. Positions Phe-1931–Gly-2163 are methyltransferase (CMeT) domain. Positions Ala-2198–Met-2544 are claisen cyclase (CLC) domain. Active-site for thioesterase activity residues include Ser-2321, Asp-2481, and His-2513.

Methylphloroacetophenone synthase; part of the gene cluster that mediates the biosynthesis of usnic acid, a dibenzofuran lichen product possessing a broad spectrum of biological activities. Two genes, mpas and mpao, comprise the usnic acid biosynthetic gene cluster with a single post-PKS enzyme, the methylphloracetophenone oxidase (mpao). The methylphloroacetophenone synthase (mpas) is a non-reducing polyketide synthase that produces methylphloracetophenone from acetate via a methylated tetraketide intermediate. The methylphloroacetophenone oxidase then carries out the oxidative dimerization of methylphloracetophenone to usnic acid. This is Methylphloroacetophenone synthase from Cladonia uncialis (Cup lichen).